We begin with the raw amino-acid sequence, 250 residues long: 5'-nucleotidase SurE (250 aa).

A divalent metal cation is bound by residues Asp-9, Asp-10, Ser-40, and Asn-92.

It belongs to the SurE nucleotidase family. It depends on a divalent metal cation as a cofactor.

The protein localises to the cytoplasm. The catalysed reaction is a ribonucleoside 5'-phosphate + H2O = a ribonucleoside + phosphate. Nucleotidase that shows phosphatase activity on nucleoside 5'-monophosphates. This Shewanella pealeana (strain ATCC 700345 / ANG-SQ1) protein is 5'-nucleotidase SurE.